We begin with the raw amino-acid sequence, 411 residues long: Serine hydroxymethyltransferase (411 aa).

Residues Leu-119 and 123-125 contribute to the (6S)-5,6,7,8-tetrahydrofolate site; that span reads GHL. Lys-228 bears the N6-(pyridoxal phosphate)lysine mark.

Belongs to the SHMT family. As to quaternary structure, homodimer. It depends on pyridoxal 5'-phosphate as a cofactor.

It localises to the cytoplasm. It catalyses the reaction (6R)-5,10-methylene-5,6,7,8-tetrahydrofolate + glycine + H2O = (6S)-5,6,7,8-tetrahydrofolate + L-serine. Its pathway is one-carbon metabolism; tetrahydrofolate interconversion. It participates in amino-acid biosynthesis; glycine biosynthesis; glycine from L-serine: step 1/1. Functionally, catalyzes the reversible interconversion of serine and glycine with tetrahydrofolate (THF) serving as the one-carbon carrier. This reaction serves as the major source of one-carbon groups required for the biosynthesis of purines, thymidylate, methionine, and other important biomolecules. Also exhibits THF-independent aldolase activity toward beta-hydroxyamino acids, producing glycine and aldehydes, via a retro-aldol mechanism. This Clostridium kluyveri (strain NBRC 12016) protein is Serine hydroxymethyltransferase.